The chain runs to 363 residues: Peptide chain release factor 1 (363 aa).

Q237 bears the N5-methylglutamine mark. The span at 284-296 (EDEKRRSAEESTR) shows a compositional bias: basic and acidic residues. Residues 284–306 (EDEKRRSAEESTRRSLVASGDRS) form a disordered region.

Belongs to the prokaryotic/mitochondrial release factor family. Methylated by PrmC. Methylation increases the termination efficiency of RF1.

It localises to the cytoplasm. Peptide chain release factor 1 directs the termination of translation in response to the peptide chain termination codons UAG and UAA. The sequence is that of Peptide chain release factor 1 from Shewanella putrefaciens (strain CN-32 / ATCC BAA-453).